Consider the following 290-residue polypeptide: Sodium/potassium-transporting ATPase subunit beta-2 (290 aa).

The Cytoplasmic portion of the chain corresponds to 1 to 39 (MVIQKEKKSCGQVVEEWKEFVWNPRTHQFMGRTGTSWAF). Residues 40-67 (ILLFYLVFYGFLTAMFSLTMWVMLQTVS) traverse the membrane as a helical; Signal-anchor for type II membrane protein segment. The Extracellular segment spans residues 68 to 290 (DHTPKYQDRL…VAFKLRINKT (223 aa)). N96 and N118 each carry an N-linked (GlcNAc...) asparagine glycan. The cysteines at positions 129 and 150 are disulfide-linked. N153 carries N-linked (GlcNAc...) asparagine glycosylation. C160 and C177 are oxidised to a cystine. N-linked (GlcNAc...) asparagine glycosylation is found at N193, N197, N220, and N238. The tract at residues 193 to 290 (NQSMNVTCVG…VAFKLRINKT (98 aa)) is immunoglobulin-like. Cysteines 200 and 261 form a disulfide.

It belongs to the X(+)/potassium ATPases subunit beta family. As to quaternary structure, the sodium/potassium-transporting ATPase is composed of a catalytic alpha subunit, an auxiliary non-catalytic beta subunit and an additional regulatory subunit. Interacts with isoform 2 of BSG.

It is found in the cell membrane. In terms of biological role, this is the non-catalytic component of the active enzyme, which catalyzes the hydrolysis of ATP coupled with the exchange of Na(+) and K(+) ions across the plasma membrane. The exact function of the beta-2 subunit is not known. Functionally, mediates cell adhesion of neurons and astrocytes, and promotes neurite outgrowth. The chain is Sodium/potassium-transporting ATPase subunit beta-2 (Atp1b2) from Mus musculus (Mouse).